A 477-amino-acid polypeptide reads, in one-letter code: Epoxyalcohol synthase CYP5164B1 (477 aa).

Position 421 (Cys421) interacts with heme.

The protein belongs to the cytochrome P450 family. It depends on heme as a cofactor.

It carries out the reaction (9S)-hydroperoxy-(10E,12Z)-octadecadienoate = (11S)-hydroxy-(9S,10S)-epoxy-(12Z)-octadecenoate. It catalyses the reaction (13S)-hydroperoxy-(9Z,11E)-octadecadienoate = 11-hydroxy-12,13-epoxy-(9Z)-octadecenoate. Its pathway is lipid metabolism; oxylipin biosynthesis. Its function is as follows. Cytochrome P450 epoxyalcohol synthase involved in the metabolism of oxylipins 'ectocarpins' natural products, such as hybridalactone, ecklonilactones and derivatives. Isomerizes the hydroperoxides into epoxyalcohols via epoxyallylic radical. Can use linoleic acid 9-hydroperoxide ((9S,10E,12Z)-9-hydroperoxy-10,12-octadecadienoic, 9-HPOD) as preferred substrate to produce (9S,10S,11S,12Z)-9,10-epoxy-11-hydroxy-12-octadecenoic acid and, to a lower extent, active with linoleate 13-hydroperoxide ((9Z,11E,13S)-13-hydroperoxy-9,11-octadecadienoic, 13-HPOD) to produce 11-hydroxy-12,13-epoxy-9-octadecenoic acid. No activity toward alpha-linolenic acid 9- and 13-hydroperoxides, and toward eicosapentaenoic acid 15-hydroperoxide. The sequence is that of Epoxyalcohol synthase CYP5164B1 from Ectocarpus siliculosus (Brown alga).